The primary structure comprises 431 residues: Glutamate-1-semialdehyde 2,1-aminomutase (431 aa).

At K269 the chain carries N6-(pyridoxal phosphate)lysine.

It belongs to the class-III pyridoxal-phosphate-dependent aminotransferase family. HemL subfamily. As to quaternary structure, homodimer. Requires pyridoxal 5'-phosphate as cofactor.

The protein localises to the cytoplasm. It carries out the reaction (S)-4-amino-5-oxopentanoate = 5-aminolevulinate. It participates in porphyrin-containing compound metabolism; protoporphyrin-IX biosynthesis; 5-aminolevulinate from L-glutamyl-tRNA(Glu): step 2/2. It functions in the pathway porphyrin-containing compound metabolism; chlorophyll biosynthesis. This is Glutamate-1-semialdehyde 2,1-aminomutase from Chlorobium phaeobacteroides (strain BS1).